We begin with the raw amino-acid sequence, 548 residues long: Eukaryotic translation initiation factor 3 subunit D (548 aa).

An N6-acetyllysine modification is found at Lys-53. Phosphoserine is present on Ser-161. The interval 285-299 (DFDLLTVSETANEPP) is RNA gate. The interval 523 to 548 (PDGTFSSDEDEEEEEEEEEEEEEEET) is disordered. 2 positions are modified to phosphoserine: Ser-528 and Ser-529. The segment covering 529-548 (SDEDEEEEEEEEEEEEEEET) has biased composition (acidic residues).

It belongs to the eIF-3 subunit D family. In terms of assembly, component of the eukaryotic translation initiation factor 3 (eIF-3) complex, which is composed of 13 subunits: EIF3A, EIF3B, EIF3C, EIF3D, EIF3E, EIF3F, EIF3G, EIF3H, EIF3I, EIF3J, EIF3K, EIF3L and EIF3M. The eIF-3 complex appears to include 3 stable modules: module A is composed of EIF3A, EIF3B, EIF3G and EIF3I; module B is composed of EIF3F, EIF3H, and EIF3M; and module C is composed of EIF3C, EIF3D, EIF3E, EIF3K and EIF3L. EIF3C of module C binds EIF3B of module A and EIF3H of module B, thereby linking the three modules. EIF3J is a labile subunit that binds to the eIF-3 complex via EIF3B. The eIF-3 complex interacts with RPS6KB1 under conditions of nutrient depletion. Mitogenic stimulation leads to binding and activation of a complex composed of MTOR and RPTOR, leading to phosphorylation and release of RPS6KB1 and binding of EIF4B to eIF-3. As to quaternary structure, (Microbial infection) Interacts with Norwalk virus VPg protein.

It localises to the cytoplasm. Functionally, mRNA cap-binding component of the eukaryotic translation initiation factor 3 (eIF-3) complex, a complex required for several steps in the initiation of protein synthesis of a specialized repertoire of mRNAs. The eIF-3 complex associates with the 40S ribosome and facilitates the recruitment of eIF-1, eIF-1A, eIF-2:GTP:methionyl-tRNAi and eIF-5 to form the 43S pre-initiation complex (43S PIC). The eIF-3 complex stimulates mRNA recruitment to the 43S PIC and scanning of the mRNA for AUG recognition. The eIF-3 complex is also required for disassembly and recycling of post-termination ribosomal complexes and subsequently prevents premature joining of the 40S and 60S ribosomal subunits prior to initiation. The eIF-3 complex specifically targets and initiates translation of a subset of mRNAs involved in cell proliferation, including cell cycling, differentiation and apoptosis, and uses different modes of RNA stem-loop binding to exert either translational activation or repression. In the eIF-3 complex, EIF3D specifically recognizes and binds the 7-methylguanosine cap of a subset of mRNAs. (Microbial infection) In case of FCV infection, plays a role in the ribosomal termination-reinitiation event leading to the translation of VP2. This Homo sapiens (Human) protein is Eukaryotic translation initiation factor 3 subunit D.